We begin with the raw amino-acid sequence, 89 residues long: Large ribosomal subunit protein bL31B (89 aa).

This sequence belongs to the bacterial ribosomal protein bL31 family. Type B subfamily. As to quaternary structure, part of the 50S ribosomal subunit.

The polypeptide is Large ribosomal subunit protein bL31B (Corynebacterium aurimucosum (strain ATCC 700975 / DSM 44827 / CIP 107346 / CN-1) (Corynebacterium nigricans)).